A 352-amino-acid chain; its full sequence is Histidine protein kinase SaeS (352 aa).

2 helical membrane passes run 9–29 (QIII…VIAY) and 41–61 (TLAI…SIFI). In terms of domain architecture, Histidine kinase spans 130–349 (NLAHDLKTPL…TMTLTLKKFQ (220 aa)). His-133 carries the phosphohistidine; by autocatalysis modification.

Post-translationally, autophosphorylated.

It localises to the cell membrane. It carries out the reaction ATP + protein L-histidine = ADP + protein N-phospho-L-histidine.. Functionally, member of the two-component regulatory system SaeR/SaeS. Probably functions as a membrane-associated protein kinase that upon sensing the appropriate signal, autophosphorylates and in turn activates the cytosolic response regulator SaeR. The chain is Histidine protein kinase SaeS (saeS) from Staphylococcus epidermidis (strain ATCC 35984 / DSM 28319 / BCRC 17069 / CCUG 31568 / BM 3577 / RP62A).